Reading from the N-terminus, the 216-residue chain is Protein ORM2 (216 aa).

The segment at Met-1 to Ile-50 is disordered. Residues Met-1–Arg-78 lie on the Cytoplasmic side of the membrane. A phosphoserine mark is found at Ser-9 and Ser-15. Polar residues predominate over residues Leu-17–Val-38. Thr-18 is subject to Phosphothreonine. Phosphoserine is present on residues Ser-22, Ser-29, and Ser-51. Residues Gly-79–Gly-99 form a helical membrane-spanning segment. Over Ser-100–Lys-103 the chain is Extracellular. A helical transmembrane segment spans residues Trp-104–Val-124. Topologically, residues Lys-125–Glu-148 are cytoplasmic. Residues Thr-149 to Ser-169 form a helical membrane-spanning segment. The Extracellular segment spans residues Asn-170–Met-177. A helical membrane pass occupies residues Thr-178–Ile-198. Residues Thr-199–Ser-216 are Cytoplasmic-facing.

Belongs to the ORM family. As to quaternary structure, component of the SPOTS complex, at least composed of LCB1/2 (LCB1 and/or LCB2), ORM1/2 (ORM1 and/or ORM2), SAC1 and TSC3. Post-translationally, phosphorylated in case of disruption of sphingolipid synthesis. Phosphorylation regulates the inhibitory activity of serine palmitoyltransferases (LCB1 and LCB2).

The protein resides in the endoplasmic reticulum membrane. Its function is as follows. Component of the SPOTS complex that acts as a negative regulator of sphingolipid synthesis. Acts by inhibiting serine palmitoyltransferases (LCB1 and LCB2) activity. Along with ORM1, plays a role in the phosphorylation of LAC1 and YPK1, the distribution of actin patches between mother and daughter cells, and in endocytosis. The polypeptide is Protein ORM2 (ORM2) (Saccharomyces cerevisiae (strain ATCC 204508 / S288c) (Baker's yeast)).